A 132-amino-acid polypeptide reads, in one-letter code: Small ribosomal subunit protein uS8c (132 aa).

Belongs to the universal ribosomal protein uS8 family. As to quaternary structure, part of the 30S ribosomal subunit.

The protein localises to the plastid. It localises to the chloroplast. One of the primary rRNA binding proteins, it binds directly to 16S rRNA central domain where it helps coordinate assembly of the platform of the 30S subunit. The protein is Small ribosomal subunit protein uS8c (rps8) of Buxus microphylla (Littleleaf boxwood).